A 208-amino-acid chain; its full sequence is Small ribosomal subunit protein uS4 (208 aa).

The region spanning 98 to 161 (RRLDNVIYRL…KESPRIKELL (64 aa)) is the S4 RNA-binding domain.

It belongs to the universal ribosomal protein uS4 family. Part of the 30S ribosomal subunit. Contacts protein S5. The interaction surface between S4 and S5 is involved in control of translational fidelity.

In terms of biological role, one of the primary rRNA binding proteins, it binds directly to 16S rRNA where it nucleates assembly of the body of the 30S subunit. Functionally, with S5 and S12 plays an important role in translational accuracy. The protein is Small ribosomal subunit protein uS4 of Pelotomaculum thermopropionicum (strain DSM 13744 / JCM 10971 / SI).